Reading from the N-terminus, the 404-residue chain is L-cysteine:1D-myo-inositol 2-amino-2-deoxy-alpha-D-glucopyranoside ligase (404 aa).

C35 serves as a coordination point for Zn(2+). L-cysteinyl-5'-AMP-binding positions include 35–38 (CGIT), T50, and 73–75 (NVT). The short motif at 37–47 (ITPYDATHLGH) is the 'HIGH' region element. Residues 178–183 (ERGGDP) carry the 'ERGGDP' region motif. W219 serves as a coordination point for L-cysteinyl-5'-AMP. C223 contacts Zn(2+). 241 to 243 (GND) lines the L-cysteinyl-5'-AMP pocket. H248 provides a ligand contact to Zn(2+). I275 contributes to the L-cysteinyl-5'-AMP binding site. Residues 281–285 (KMSKS) carry the 'KMSKS' region motif.

Belongs to the class-I aminoacyl-tRNA synthetase family. MshC subfamily. Monomer. Zn(2+) is required as a cofactor.

It carries out the reaction 1D-myo-inositol 2-amino-2-deoxy-alpha-D-glucopyranoside + L-cysteine + ATP = 1D-myo-inositol 2-(L-cysteinylamino)-2-deoxy-alpha-D-glucopyranoside + AMP + diphosphate + H(+). Functionally, catalyzes the ATP-dependent condensation of GlcN-Ins and L-cysteine to form L-Cys-GlcN-Ins. In Salinispora tropica (strain ATCC BAA-916 / DSM 44818 / JCM 13857 / NBRC 105044 / CNB-440), this protein is L-cysteine:1D-myo-inositol 2-amino-2-deoxy-alpha-D-glucopyranoside ligase.